Here is a 162-residue protein sequence, read N- to C-terminus: N5-carboxyaminoimidazole ribonucleotide mutase (162 aa).

Positions 11, 14, and 41 each coordinate substrate.

This sequence belongs to the AIR carboxylase family. Class I subfamily.

It carries out the reaction 5-carboxyamino-1-(5-phospho-D-ribosyl)imidazole + H(+) = 5-amino-1-(5-phospho-D-ribosyl)imidazole-4-carboxylate. It functions in the pathway purine metabolism; IMP biosynthesis via de novo pathway; 5-amino-1-(5-phospho-D-ribosyl)imidazole-4-carboxylate from 5-amino-1-(5-phospho-D-ribosyl)imidazole (N5-CAIR route): step 2/2. Its function is as follows. Catalyzes the conversion of N5-carboxyaminoimidazole ribonucleotide (N5-CAIR) to 4-carboxy-5-aminoimidazole ribonucleotide (CAIR). The chain is N5-carboxyaminoimidazole ribonucleotide mutase from Bacillus subtilis (strain 168).